The primary structure comprises 134 residues: Small ribosomal subunit protein uS8c (134 aa).

This sequence belongs to the universal ribosomal protein uS8 family. In terms of assembly, part of the 30S ribosomal subunit.

It localises to the plastid. The protein resides in the chloroplast. Functionally, one of the primary rRNA binding proteins, it binds directly to 16S rRNA central domain where it helps coordinate assembly of the platform of the 30S subunit. This chain is Small ribosomal subunit protein uS8c (rps8), found in Eucalyptus globulus subsp. globulus (Tasmanian blue gum).